Consider the following 410-residue polypeptide: Peptidase T (410 aa).

Histidine 79 provides a ligand contact to Zn(2+). Residue aspartate 81 is part of the active site. Aspartate 142 provides a ligand contact to Zn(2+). Glutamate 176 (proton acceptor) is an active-site residue. 3 residues coordinate Zn(2+): glutamate 177, aspartate 199, and histidine 381.

It belongs to the peptidase M20B family. It depends on Zn(2+) as a cofactor.

It localises to the cytoplasm. The catalysed reaction is Release of the N-terminal residue from a tripeptide.. Functionally, cleaves the N-terminal amino acid of tripeptides. The sequence is that of Peptidase T (pepT) from Bacillus subtilis (strain 168).